The primary structure comprises 75 residues: UPF0270 protein PST_1436 (75 aa).

This sequence belongs to the UPF0270 family.

This is UPF0270 protein PST_1436 from Stutzerimonas stutzeri (strain A1501) (Pseudomonas stutzeri).